Here is a 409-residue protein sequence, read N- to C-terminus: NADH-quinone oxidoreductase subunit D (409 aa).

Belongs to the complex I 49 kDa subunit family. As to quaternary structure, NDH-1 is composed of 14 different subunits. Subunits NuoB, C, D, E, F, and G constitute the peripheral sector of the complex.

The protein localises to the cell inner membrane. It catalyses the reaction a quinone + NADH + 5 H(+)(in) = a quinol + NAD(+) + 4 H(+)(out). NDH-1 shuttles electrons from NADH, via FMN and iron-sulfur (Fe-S) centers, to quinones in the respiratory chain. The immediate electron acceptor for the enzyme in this species is believed to be ubiquinone. Couples the redox reaction to proton translocation (for every two electrons transferred, four hydrogen ions are translocated across the cytoplasmic membrane), and thus conserves the redox energy in a proton gradient. This Campylobacter concisus (strain 13826) protein is NADH-quinone oxidoreductase subunit D.